Reading from the N-terminus, the 244-residue chain is Probable transcriptional regulatory protein Xfasm12_1059 (244 aa).

It belongs to the TACO1 family.

Its subcellular location is the cytoplasm. This is Probable transcriptional regulatory protein Xfasm12_1059 from Xylella fastidiosa (strain M12).